A 244-amino-acid chain; its full sequence is uncharacterized protein (244 aa).

This is an uncharacterized protein from Encephalitozoon cuniculi (strain GB-M1) (Microsporidian parasite).